A 469-amino-acid chain; its full sequence is IME2-dependent-signaling protein (469 aa).

Residue Met1 is modified to N-acetylmethionine. Position 13 is a phosphothreonine (Thr13). Disordered regions lie at residues 22–55, 67–92, and 117–143; these read KSWS…PATM, ARGS…QQQQ, and DLTL…PPLT. 3 positions are modified to phosphoserine: Ser23, Ser27, and Ser39. Composition is skewed to polar residues over residues 25-42 and 67-82; these read SESQ…SPIG and ARGS…GSSQ. 5 positions are modified to phosphoserine: Ser122, Ser130, Ser136, Ser147, and Ser148.

Seems to act indirectly to modify IME2 activity, thus permitting IME2 to carry out later meiotic functions. This is IME2-dependent-signaling protein (IDS2) from Saccharomyces cerevisiae (strain ATCC 204508 / S288c) (Baker's yeast).